We begin with the raw amino-acid sequence, 373 residues long: MLLGLAAMELKVWVDGIQRVVCGVSEQTTCQEVVIALAQAIGQTGRFVLVQRLREKERQLLPQECPVGAQATCGQFASDVQFVLRRTGPSLAGRPSSDSCPPPERCLIRASLPVKPRAALGCEPRKTLTPEPAPSLSRPGPAAPVTPTPGCCTDLRGLELRVQRNAEELGHEAFWEQELRREQAREREGQARLQALSAATAEHAARLQALDAQARALEAELQLAAEAPGPPSPMASATERLHQDLAVQERQSAEVQGSLALVSRALEAAERALQAQAQELEELNRELRQCNLQQFIQQTGAALPPPPRPDRGPPGTQGPLPPAREESLLGAPSESHAGAQPRPRGGPHDAELLEVAAAPAPEWCPLAAQPQAL.

The Ras-associating domain occupies 6 to 89; that stretch reads AAMELKVWVD…VQFVLRRTGP (84 aa). The interval 122-150 is disordered; the sequence is CEPRKTLTPEPAPSLSRPGPAAPVTPTPG. 2 coiled-coil regions span residues 175 to 227 and 248 to 297; these read WEQE…AAEA and QERQ…QFIQ. The interval 300–356 is disordered; that stretch reads GAALPPPPRPDRGPPGTQGPLPPAREESLLGAPSESHAGAQPRPRGGPHDAELLEVA.

Interacts with MAP2K7 and GTP-bound NRAS. In terms of processing, polyubiquitinated and degraded by the proteasome upon prolonged stress stimuli.

It is found in the cytoplasm. The protein localises to the cytoskeleton. Its subcellular location is the microtubule organizing center. It localises to the centrosome. In terms of biological role, negatively regulates stress-induced JNK activation and apoptosis by promoting MAP2K7 phosphorylation and inhibiting its ability to activate JNK. Following prolonged stress, anti-apoptotic effect stops because of degradation of RASSF7 protein via the ubiquitin-proteasome pathway. Required for the activation of AURKB and chromosomal congression during mitosis where it stimulates microtubule polymerization. This is Ras association domain-containing protein 7 (RASSF7) from Homo sapiens (Human).